Here is a 118-residue protein sequence, read N- to C-terminus: Large ribosomal subunit protein bL19 (118 aa).

It belongs to the bacterial ribosomal protein bL19 family.

Its function is as follows. This protein is located at the 30S-50S ribosomal subunit interface and may play a role in the structure and function of the aminoacyl-tRNA binding site. The sequence is that of Large ribosomal subunit protein bL19 from Geotalea daltonii (strain DSM 22248 / JCM 15807 / FRC-32) (Geobacter daltonii).